The following is a 403-amino-acid chain: MSQNKKVVLAYSGGLDTSVAVKWLQEQGYEVVACCLDVGEGKDLAFVQQKALQVGAVQSYMIDAKEEFAEEFALTALQAHTMYEGKYPLVSALSRPLIAKKLVEVAEKENAVAVAHGCTGKGNDQVRFEVSIKALNPDLEVLAPVREWKWSRDEEIDYAQKHGIPIPINLDSPYSIDQNLWGRSNECGILEDPWAAPPEGAYDLTTPLEKTPDTPEIIEITFEKGKPTAIDGIQYSLSDLILHLNEVAGQHGVGRIDHVENRLVGIKSREVYECPGAVTLLKAHKELEDLTLVKEVAHFKPIVEQKMAELIYNGLWFSPLKGALDAFLQETQQNVTGVVRVKLFKGHAIVEGRKSPYSLYDENLATYTKADEFDHDAAVGFINLWGLPTKVNSIVNKKEQVKA.

An ATP-binding site is contributed by 10–18; it reads AYSGGLDTS. An L-citrulline-binding site is contributed by Tyr-87. Position 117 (Gly-117) interacts with ATP. L-aspartate-binding residues include Thr-119, Asn-123, and Asp-124. Asn-123 provides a ligand contact to L-citrulline. Positions 127, 175, 184, 260, and 272 each coordinate L-citrulline.

The protein belongs to the argininosuccinate synthase family. Type 1 subfamily. Homotetramer.

It localises to the cytoplasm. The catalysed reaction is L-citrulline + L-aspartate + ATP = 2-(N(omega)-L-arginino)succinate + AMP + diphosphate + H(+). It functions in the pathway amino-acid biosynthesis; L-arginine biosynthesis; L-arginine from L-ornithine and carbamoyl phosphate: step 2/3. The sequence is that of Argininosuccinate synthase from Bacillus pumilus (strain SAFR-032).